An 851-amino-acid polypeptide reads, in one-letter code: Transcriptional regulator RFX1 (851 aa).

Composition is skewed to polar residues over residues 1–11 and 20–34; these read MSSDQTPQNRN and PRLQQQTSQIPSTGP. Disordered stretches follow at residues 1-121, 134-170, and 195-230; these read MSSD…EPHP, QSQFQFDYSSPYIGQSQSQSQSQSQAQPQPHPQPQTY, and HEASSADNDSATNITTPQKRKKQKRSESVTPNTGEN. Positions 38 to 53 are enriched in basic and acidic residues; sequence QQRERSQEQESDHEHQ. Low complexity predominate over residues 54–84; the sequence is QAQQHLHQFQQSNLTPSTTAFPSSTSIPTFS. Residues 85–114 show a composition bias toward polar residues; sequence KQDQGYHNQFSSPQSSYRKIGNFAQSSNAP. The segment covering 141–170 has biased composition (low complexity); it reads YSSPYIGQSQSQSQSQSQAQPQPHPQPQTY. Residues 199–211 are compositionally biased toward polar residues; that stretch reads SADNDSATNITTP. A DNA-binding region (RFX-type winged-helix) is located at residues 282 to 357; the sequence is GMVWLLNSCD…YHYCGIKLTG (76 aa). Disordered regions lie at residues 368 to 411 and 783 to 806; these read YQQK…SVSY and PPSLSSLPQTQQQNPVIQEETGTQ. Positions 384–393 are enriched in polar residues; that stretch reads AQVGSSTSSA. The segment covering 783–797 has biased composition (low complexity); it reads PPSLSSLPQTQQQNP.

It belongs to the RFX family.

It is found in the nucleus. Functionally, transcription factor involved in DNA damage responses, morphogenesis, and virulence. This Candida albicans (strain SC5314 / ATCC MYA-2876) (Yeast) protein is Transcriptional regulator RFX1 (RFX1).